Consider the following 691-residue polypeptide: Germ cell nuclear acidic protein (691 aa).

The SUMO interaction motif 1 (SIM) motif lies at 22–25 (ILNV). The segment at 25-488 (VQSSSDDTSG…GAAKVEKRKT (464 aa)) is disordered. Low complexity predominate over residues 27-36 (SSSDDTSGSS). The span at 48–63 (CILNVQSRSGDTSGSS) shows a compositional bias: polar residues. 3 consecutive short sequence motifs (SUMO interaction motif 1 (SIM)) follow at residues 76 to 79 (VVVI), 97 to 100 (LLEI), and 121 to 124 (IVIS). Positions 86–97 (ECHTHEEKKAKL) are enriched in basic and acidic residues. Residues 124–333 (SDDDNDDDNG…VPDDNSDDLE (210 aa)) show a composition bias toward acidic residues. Basic residues predominate over residues 467–488 (GHKKRGPSKKKPGAAKVEKRKT). Residues 522 to 677 (VQRIYDLFNR…AKCKGSLVMV (156 aa)) form the SprT-like domain.

Belongs to the serine-aspartate repeat-containing protein (SDr) family. Interacts (via SIM domains) with SUMO2; this interaction allows the GCNA recruitment to DPCs sites. Interacts with TOP2A; this interaction allows the resolution of topoisomerase II (TOP2A) DNA-protein cross-links. As to expression, expressed in germ cells of the testis (at protein level). Detected in skeletal muscle, liver, kidney, pancreas, heart, lung and brain. Expressed throughout spermatogenesis, from spermatogonia to elongated spermatids, in normal adult testis (at protein level).

The protein localises to the nucleus. Its subcellular location is the PML body. It is found in the chromosome. May play a role in DNA-protein cross-links (DPCs) clearance through a SUMO-dependent recruitment to sites of DPCs, ensuring the genomic stability by protecting germ cells and early embryos from various sources of damage. Can resolve the topoisomerase II (TOP2A) DPCs. This is Germ cell nuclear acidic protein from Homo sapiens (Human).